We begin with the raw amino-acid sequence, 169 residues long: Cell division inhibitor SulA (169 aa).

Residues Ala-106 to Tyr-112 form a ftsZ binding region. The lon protease binding stretch occupies residues Lys-162–His-169.

The protein belongs to the SulA family. Interacts with FtsZ. Is rapidly cleaved and degraded by the Lon protease once DNA damage is repaired.

Functionally, component of the SOS system and an inhibitor of cell division. Accumulation of SulA causes rapid cessation of cell division and the appearance of long, non-septate filaments. In the presence of GTP, binds a polymerization-competent form of FtsZ in a 1:1 ratio, thus inhibiting FtsZ polymerization and therefore preventing it from participating in the assembly of the Z ring. This mechanism prevents the premature segregation of damaged DNA to daughter cells during cell division. This Salmonella gallinarum (strain 287/91 / NCTC 13346) protein is Cell division inhibitor SulA.